The following is a 436-amino-acid chain: Serine/threonine-protein kinase STK11 (436 aa).

Ser-31 is modified (phosphoserine). An N6-acetyllysine mark is found at Lys-44 and Lys-48. The interval 45-90 is sufficient for interaction with SIRT1; the sequence is LIGKYLMGDLLGEGSYGKVKEVLDSETLCRRAVKILKKKKLRRIPN. Positions 49 to 309 constitute a Protein kinase domain; the sequence is YLMGDLLGEG…IRQIRQHSWF (261 aa). Residues 55 to 63 and Lys-78 contribute to the ATP site; that span reads LGEGSYGKV. 2 positions are modified to N6-acetyllysine: Lys-96 and Lys-97. Asp-176 (proton acceptor) is an active-site residue. At Thr-189 the chain carries Phosphothreonine; by autocatalysis. N6-acetyllysine is present on residues Lys-296 and Lys-311. The residue at position 325 (Ser-325) is a Phosphoserine. A Phosphothreonine; by autocatalysis modification is found at Thr-336. Thr-366 bears the Phosphothreonine; by ATM and autocatalysis mark. Residues 397 to 421 form a disordered region; that stretch reads GTEPQLSSKVKPEGRPGAANPARKV. Ser-403 carries the phosphoserine modification. Lys-420 carries the N6-acetyllysine modification. A lipid anchor (S-palmitoyl cysteine) is attached at Cys-422. Residue Lys-426 is modified to N6-acetyllysine. At Ser-431 the chain carries Phosphoserine; by autocatalysis, PKA, PKC/PRKCZ and RPS6KA1. Cys-433 is modified (cysteine methyl ester). Cys-433 carries S-farnesyl cysteine lipidation. Residue Lys-434 is modified to N6-acetyllysine. The propeptide at 434–436 is removed in mature form; sequence KQQ.

This sequence belongs to the protein kinase superfamily. CAMK Ser/Thr protein kinase family. LKB1 subfamily. Catalytic component of a trimeric complex composed of STK11/LKB1, STRAD (STRADA or STRADB) and CAB39/MO25 (CAB39/MO25alpha or CAB39L/MO25beta): the complex tethers STK11/LKB1 in the cytoplasm and stimulates its catalytic activity. Found in a ternary complex composed of SMAD4, STK11/LKB1 and STK11IP. Interacts with NR4A1, p53/TP53, SMAD4, STK11IP and WDR6. Interacts with NISCH; this interaction may increase STK11 activity. Interacts with SIRT1; the interaction deacetylates STK11. Interacts with CDKN1A. Mg(2+) is required as a cofactor. Requires Mn(2+) as cofactor. In terms of processing, phosphorylated by ATM at Thr-366 following ionizing radiation (IR). Phosphorylation at Ser-431 by RPS6KA1 and/or some PKA is required to inhibit cell growth. Phosphorylation at Ser-431 is also required during neuronal polarization to mediate phosphorylation of BRSK1 and BRSK2. Phosphorylation by PKC/PRKCZ at Ser-397 in isoform 2 promotes metformin (or peroxynitrite)-induced nuclear export of STK11 and activation of AMPK. UV radiation -induced phosphorylation at Thr-366 mediates CDKN1A degradation. Post-translationally, acetylated. Deacetylation at Lys-48 enhances cytoplasmic localization and kinase activity in vitro. Expressed in brain, heart, testis, skeletal muscle and spleen, and weakly in liver and kidney. Isoform 1 is expressed at highest levels in the brain. Isoform 2 is expressed at highest levels in the testis, primarily in postmitotic developing germ cells (at protein level).

The protein resides in the nucleus. The protein localises to the cytoplasm. It is found in the membrane. Its subcellular location is the mitochondrion. It catalyses the reaction L-seryl-[protein] + ATP = O-phospho-L-seryl-[protein] + ADP + H(+). It carries out the reaction L-threonyl-[protein] + ATP = O-phospho-L-threonyl-[protein] + ADP + H(+). Its activity is regulated as follows. Activated by forming a complex with STRAD (STRADA or STRADB) and CAB39/MO25 (CAB39/MO25alpha or CAB39L/MO25beta): STRADA (or STRADB)-binding promotes a conformational change of STK11/LKB1 in an active conformation, which is stabilized by CAB39/MO25alpha (or CAB39L/MO25beta) interacting with the STK11/LKB1 activation loop. Sequestration in the nucleus by NR4A1 prevents it from phosphorylating and activating cytoplasmic AMPK. Functionally, tumor suppressor serine/threonine-protein kinase that controls the activity of AMP-activated protein kinase (AMPK) family members, thereby playing a role in various processes such as cell metabolism, cell polarity, apoptosis and DNA damage response. Acts by phosphorylating the T-loop of AMPK family proteins, thus promoting their activity: phosphorylates PRKAA1, PRKAA2, BRSK1, BRSK2, MARK1, MARK2, MARK3, MARK4, NUAK1, NUAK2, SIK1, SIK2, SIK3 and SNRK but not MELK. Also phosphorylates non-AMPK family proteins such as STRADA, PTEN and possibly p53/TP53. Acts as a key upstream regulator of AMPK by mediating phosphorylation and activation of AMPK catalytic subunits PRKAA1 and PRKAA2 and thereby regulates processes including: inhibition of signaling pathways that promote cell growth and proliferation when energy levels are low, glucose homeostasis in liver, activation of autophagy when cells undergo nutrient deprivation, and B-cell differentiation in the germinal center in response to DNA damage. Also acts as a regulator of cellular polarity by remodeling the actin cytoskeleton. Required for cortical neuron polarization by mediating phosphorylation and activation of BRSK1 and BRSK2, leading to axon initiation and specification. Involved in DNA damage response: interacts with p53/TP53 and recruited to the CDKN1A/WAF1 promoter to participate in transcription activation. Able to phosphorylate p53/TP53; the relevance of such result in vivo is however unclear and phosphorylation may be indirect and mediated by downstream STK11/LKB1 kinase NUAK1. Also acts as a mediator of p53/TP53-dependent apoptosis via interaction with p53/TP53: translocates to the mitochondrion during apoptosis and regulates p53/TP53-dependent apoptosis pathways. Regulates UV radiation-induced DNA damage response mediated by CDKN1A. In association with NUAK1, phosphorylates CDKN1A in response to UV radiation and contributes to its degradation which is necessary for optimal DNA repair. Has a role in spermiogenesis. In Rattus norvegicus (Rat), this protein is Serine/threonine-protein kinase STK11.